Consider the following 638-residue polypeptide: Threonine--tRNA ligase (638 aa).

Residues 1 to 61 (MPVVTLPDGS…EADAEVALVT (61 aa)) enclose the TGS domain. Residues 242–533 (DHRKLGKALD…LTEHYAGQYP (292 aa)) are catalytic. Positions 333, 384, and 510 each coordinate Zn(2+).

The protein belongs to the class-II aminoacyl-tRNA synthetase family. In terms of assembly, homodimer. The cofactor is Zn(2+).

It is found in the cytoplasm. The catalysed reaction is tRNA(Thr) + L-threonine + ATP = L-threonyl-tRNA(Thr) + AMP + diphosphate + H(+). Functionally, catalyzes the attachment of threonine to tRNA(Thr) in a two-step reaction: L-threonine is first activated by ATP to form Thr-AMP and then transferred to the acceptor end of tRNA(Thr). Also edits incorrectly charged L-seryl-tRNA(Thr). The sequence is that of Threonine--tRNA ligase from Methylococcus capsulatus (strain ATCC 33009 / NCIMB 11132 / Bath).